The sequence spans 239 residues: MADASIEFKGTSFTLSVLHLKTSKLADIRADLVKKVAQAPDFFYLVPVVVNIEQLDCSIDYQAVKTLIEEFNFTFVGFTGSVDKEQRKLIRELGFSFVNTTRVDTSQKAAIAEKAIVAESKVTAAIPECNLYTDKVHRGQIRSGQQIYAKDQNLVVIGSVSAGAEVIADGNIHVYGSLRGRAIAGAKGHHKAQIYCQNLEAELVSINGNYWLSESMEQHWGSPVYIHLTDSELTSSKLI.

It belongs to the MinC family. As to quaternary structure, interacts with MinD and FtsZ.

Functionally, cell division inhibitor that blocks the formation of polar Z ring septums. Rapidly oscillates between the poles of the cell to destabilize FtsZ filaments that have formed before they mature into polar Z rings. Prevents FtsZ polymerization. The sequence is that of Probable septum site-determining protein MinC from Colwellia psychrerythraea (strain 34H / ATCC BAA-681) (Vibrio psychroerythus).